The following is a 406-amino-acid chain: Aspartokinase (406 aa).

Residues 342–406 enclose the ACT domain; that stretch reads IIGHGIKNDL…LLKISETGHC (65 aa).

Belongs to the aspartokinase family.

It catalyses the reaction L-aspartate + ATP = 4-phospho-L-aspartate + ADP. Its pathway is amino-acid biosynthesis; L-lysine biosynthesis via DAP pathway; (S)-tetrahydrodipicolinate from L-aspartate: step 1/4. The protein operates within amino-acid biosynthesis; L-methionine biosynthesis via de novo pathway; L-homoserine from L-aspartate: step 1/3. It participates in amino-acid biosynthesis; L-threonine biosynthesis; L-threonine from L-aspartate: step 1/5. The sequence is that of Aspartokinase (lysC) from Rickettsia bellii (strain RML369-C).